We begin with the raw amino-acid sequence, 576 residues long: Protein NRT1/ PTR FAMILY 2.12 (576 aa).

11 consecutive transmembrane segments (helical) span residues 58–78 (FNVY…GALI), 89–109 (IAYA…TACL), 130–150 (KLQL…SGGI), 176–196 (FFNW…TVVV), 203–223 (WVIG…LFFV), 329–349 (VWSA…FMVF), 364–384 (IPAA…VPIY), 406–426 (MGIG…VEGV), 441–461 (WLAL…IGLI), 475–495 (IANS…SLLV), and 522–542 (YFYY…WYCA).

It belongs to the major facilitator superfamily. Proton-dependent oligopeptide transporter (POT/PTR) (TC 2.A.17) family. Expressed in flowers and siliques. Expressed in vascular bundle of the siliques and in funiculus.

The protein localises to the cell membrane. Low-affinity proton-dependent nitrate transporter. Not involved in dipeptides transport. Involved in delivering nitrate for seed development. The sequence is that of Protein NRT1/ PTR FAMILY 2.12 (NPF2.12) from Arabidopsis thaliana (Mouse-ear cress).